The chain runs to 524 residues: Ankyrin repeat-containing protein At5g02620 (524 aa).

8 ANK repeats span residues Arg16–Leu45, Ser55–Ala84, Asn90–Phe119, Ser124–Ala153, Asn158–Thr187, Lys192–Ser222, Lys226–Val255, and Ser260–Arg289. 4 helical membrane-spanning segments follow: residues Ala349–Phe369, Phe399–Val419, Leu441–Val461, and Val472–Ile492. Ser508 is modified (phosphoserine).

The protein localises to the membrane. This chain is Ankyrin repeat-containing protein At5g02620, found in Arabidopsis thaliana (Mouse-ear cress).